A 182-amino-acid chain; its full sequence is Interferon beta (182 aa).

The signal sequence occupies residues methionine 1–serine 21. Residue tyrosine 24 is modified to Phosphotyrosine. 3 N-linked (GlcNAc...) asparagine glycosylation sites follow: asparagine 50, asparagine 90, and asparagine 97.

It belongs to the alpha/beta interferon family. As to quaternary structure, monomer. In terms of processing, this beta interferon does not have a disulfide bond.

It is found in the secreted. Its function is as follows. Type I interferon cytokine that plays a key role in the innate immune response to infection, developing tumors and other inflammatory stimuli. Signals via binding to high-affinity (IFNAR2) and low-affinity (IFNAR1) heterodimeric receptor, activating the canonical Jak-STAT signaling pathway resulting in transcriptional activation or repression of interferon-regulated genes that encode the effectors of the interferon response, such as antiviral proteins, regulators of cell proliferation and differentiation, and immunoregulatory proteins. Signals mostly via binding to a IFNAR1-IFNAR2 heterodimeric receptor, but can also function with IFNAR1 alone and independently of Jak-STAT pathways. Elicits a wide variety of responses, including antiviral and antibacterial activities, and can regulate the development of B-cells, myelopoiesis and lipopolysaccharide (LPS)-inducible production of tumor necrosis factor. Plays a role in neuronal homeostasis by regulating dopamine turnover and protecting dopaminergic neurons: acts by promoting neuronal autophagy and alpha-synuclein clearance, thereby preventing dopaminergic neuron loss. IFNB1 is more potent than interferon-alpha (IFN-alpha) in inducing the apoptotic and antiproliferative pathways required for control of tumor cell growth. The protein is Interferon beta of Mus musculus (Mouse).